A 199-amino-acid chain; its full sequence is Peptidyl-prolyl cis-trans isomerase CYP22 (199 aa).

Positions 35–198 (FFDVSIGGIP…LAVVITECGE (164 aa)) constitute a PPIase cyclophilin-type domain.

The protein belongs to the cyclophilin-type PPIase family. Ubiquitous.

The enzyme catalyses [protein]-peptidylproline (omega=180) = [protein]-peptidylproline (omega=0). Its function is as follows. PPIases accelerate the folding of proteins. It catalyzes the cis-trans isomerization of proline imidic peptide bonds in oligopeptides. This Arabidopsis thaliana (Mouse-ear cress) protein is Peptidyl-prolyl cis-trans isomerase CYP22 (CYP22).